A 253-amino-acid chain; its full sequence is 5-oxoprolinase subunit A (253 aa).

Belongs to the LamB/PxpA family. In terms of assembly, forms a complex composed of PxpA, PxpB and PxpC.

It catalyses the reaction 5-oxo-L-proline + ATP + 2 H2O = L-glutamate + ADP + phosphate + H(+). In terms of biological role, catalyzes the cleavage of 5-oxoproline to form L-glutamate coupled to the hydrolysis of ATP to ADP and inorganic phosphate. The polypeptide is 5-oxoprolinase subunit A (Bacillus cereus (strain AH187)).